The sequence spans 90 residues: NAD(P)H-quinone oxidoreductase subunit H, chloroplastic (90 aa).

It belongs to the complex I 49 kDa subunit family. NDH is composed of at least 16 different subunits, 5 of which are encoded in the nucleus.

Its subcellular location is the plastid. It is found in the chloroplast thylakoid membrane. It carries out the reaction a plastoquinone + NADH + (n+1) H(+)(in) = a plastoquinol + NAD(+) + n H(+)(out). The enzyme catalyses a plastoquinone + NADPH + (n+1) H(+)(in) = a plastoquinol + NADP(+) + n H(+)(out). NDH shuttles electrons from NAD(P)H:plastoquinone, via FMN and iron-sulfur (Fe-S) centers, to quinones in the photosynthetic chain and possibly in a chloroplast respiratory chain. The immediate electron acceptor for the enzyme in this species is believed to be plastoquinone. Couples the redox reaction to proton translocation, and thus conserves the redox energy in a proton gradient. The protein is NAD(P)H-quinone oxidoreductase subunit H, chloroplastic (ndhH) of Secale cereale (Rye).